A 1374-amino-acid polypeptide reads, in one-letter code: DNA-directed RNA polymerase subunit beta (1374 aa).

This sequence belongs to the RNA polymerase beta chain family. In terms of assembly, the RNAP catalytic core consists of 2 alpha, 1 beta, 1 beta' and 1 omega subunit. When a sigma factor is associated with the core the holoenzyme is formed, which can initiate transcription.

The enzyme catalyses RNA(n) + a ribonucleoside 5'-triphosphate = RNA(n+1) + diphosphate. Its function is as follows. DNA-dependent RNA polymerase catalyzes the transcription of DNA into RNA using the four ribonucleoside triphosphates as substrates. The protein is DNA-directed RNA polymerase subunit beta of Rhodopseudomonas palustris (strain TIE-1).